An 829-amino-acid chain; its full sequence is Dipeptidyl peptidase family member 2 (829 aa).

Over 1 to 27 (MENDNYDVEEQGCSVFNGKHGYFARSC) the chain is Cytoplasmic. The chain crosses the membrane as a helical; Signal-anchor for type II membrane protein span at residues 28-48 (CVVFILIICVIFVFSVIFTFM). The Extracellular segment spans residues 49-829 (QNPINLNSDN…DCFKSNLDLL (781 aa)). N-linked (GlcNAc...) asparagine glycans are attached at residues N61, N66, N183, N209, N314, and N359. C514 and C533 form a disulfide bridge. The active-site Charge relay system is the S691. C711 and C821 are oxidised to a cystine. Residue N754 is glycosylated (N-linked (GlcNAc...) asparagine). Catalysis depends on charge relay system residues D768 and H800.

This sequence belongs to the peptidase S9B family. DPPIV subfamily.

The protein localises to the cell membrane. Functionally, removes N-terminal dipeptides sequentially from polypeptides. Essential for control of distal tip cell migration. This Caenorhabditis elegans protein is Dipeptidyl peptidase family member 2 (dpf-2).